The sequence spans 269 residues: Protein tsct-1 (269 aa).

The protein belongs to the TSC-22/Dip/Bun family.

The polypeptide is Protein tsct-1 (Caenorhabditis elegans).